A 223-amino-acid chain; its full sequence is Ribosomal RNA small subunit methyltransferase G (223 aa).

S-adenosyl-L-methionine contacts are provided by residues Gly-82, Leu-87, 133 to 134 (AE), and Arg-151.

It belongs to the methyltransferase superfamily. RNA methyltransferase RsmG family.

Its subcellular location is the cytoplasm. Functionally, specifically methylates the N7 position of guanine in position 518 of 16S rRNA. This Corynebacterium glutamicum (strain ATCC 13032 / DSM 20300 / JCM 1318 / BCRC 11384 / CCUG 27702 / LMG 3730 / NBRC 12168 / NCIMB 10025 / NRRL B-2784 / 534) protein is Ribosomal RNA small subunit methyltransferase G.